The chain runs to 33 residues: U23-ctenitoxin-Pn1a (33 aa).

3 disulfide bridges follow: Cys-3-Cys-16, Cys-10-Cys-21, and Cys-15-Cys-30.

In terms of tissue distribution, expressed by the venom gland.

It localises to the secreted. Non-toxic to mice. This chain is U23-ctenitoxin-Pn1a, found in Phoneutria nigriventer (Brazilian armed spider).